We begin with the raw amino-acid sequence, 505 residues long: Bifunctional pantoate ligase/cytidylate kinase (505 aa).

Residues 1 to 268 (MHQWRKHQQS…CGETRLIDHT (268 aa)) are pantoate--beta-alanine ligase. 18 to 25 (MGALHRGH) contributes to the ATP binding site. His-25 functions as the Proton donor in the catalytic mechanism. Gln-53 contributes to the (R)-pantoate binding site. Gln-53 serves as a coordination point for beta-alanine. 142–145 (GEKD) is a binding site for ATP. Gln-148 contacts (R)-pantoate. ATP contacts are provided by residues Val-171 and 179 to 182 (CSSR). Residues 269 to 505 (FLMSRQPIVA…PEEVWPTAGR (237 aa)) are cytidylate kinase.

This sequence in the N-terminal section; belongs to the pantothenate synthetase family. The protein in the C-terminal section; belongs to the cytidylate kinase family. Type 1 subfamily.

It localises to the cytoplasm. It catalyses the reaction (R)-pantoate + beta-alanine + ATP = (R)-pantothenate + AMP + diphosphate + H(+). It carries out the reaction CMP + ATP = CDP + ADP. The catalysed reaction is dCMP + ATP = dCDP + ADP. It functions in the pathway cofactor biosynthesis; (R)-pantothenate biosynthesis; (R)-pantothenate from (R)-pantoate and beta-alanine: step 1/1. In terms of biological role, catalyzes the condensation of pantoate with beta-alanine in an ATP-dependent reaction via a pantoyl-adenylate intermediate. Catalyzes the transfer of a phosphate group from ATP to either CMP or dCMP to form CDP or dCDP and ADP, respectively. The chain is Bifunctional pantoate ligase/cytidylate kinase from Prochlorococcus marinus (strain MIT 9313).